Here is a 557-residue protein sequence, read N- to C-terminus: 2-succinyl-5-enolpyruvyl-6-hydroxy-3-cyclohexene-1-carboxylate synthase (557 aa).

The protein belongs to the TPP enzyme family. MenD subfamily. Homodimer. Mg(2+) is required as a cofactor. The cofactor is Mn(2+). Requires thiamine diphosphate as cofactor.

It catalyses the reaction isochorismate + 2-oxoglutarate + H(+) = 5-enolpyruvoyl-6-hydroxy-2-succinyl-cyclohex-3-ene-1-carboxylate + CO2. It functions in the pathway quinol/quinone metabolism; 1,4-dihydroxy-2-naphthoate biosynthesis; 1,4-dihydroxy-2-naphthoate from chorismate: step 2/7. Its pathway is quinol/quinone metabolism; menaquinone biosynthesis. In terms of biological role, catalyzes the thiamine diphosphate-dependent decarboxylation of 2-oxoglutarate and the subsequent addition of the resulting succinic semialdehyde-thiamine pyrophosphate anion to isochorismate to yield 2-succinyl-5-enolpyruvyl-6-hydroxy-3-cyclohexene-1-carboxylate (SEPHCHC). The sequence is that of 2-succinyl-5-enolpyruvyl-6-hydroxy-3-cyclohexene-1-carboxylate synthase from Staphylococcus aureus (strain bovine RF122 / ET3-1).